A 146-amino-acid chain; its full sequence is Hemoglobin subunit beta-C (146 aa).

A Globin domain is found at 2–146 (EWTDFERATI…VVSSLGRQYH (145 aa)). The heme b site is built by His63 and His92.

It belongs to the globin family. HbC is a heterotetramer of two alpha chains and two beta-C chains. Red blood cells.

Its function is as follows. Involved in oxygen transport from gills to the various peripheral tissues. The sequence is that of Hemoglobin subunit beta-C (hbbc) from Trematomus bernacchii (Emerald rockcod).